An 83-amino-acid chain; its full sequence is MSSGGLLLLLGLLTLWAELTPVSSKDRPEFCELPPDRGTCMGFLQAFYYNPSQNKCLPFMFGGCKANPNNFKTLEECKRTCAA.

A signal peptide spans 1–24 (MSSGGLLLLLGLLTLWAELTPVSS). The 51-residue stretch at 31–81 (CELPPDRGTCMGFLQAFYYNPSQNKCLPFMFGGCKANPNNFKTLEECKRTC) folds into the BPTI/Kunitz inhibitor domain. Intrachain disulfides connect Cys-31/Cys-81, Cys-40/Cys-64, and Cys-56/Cys-77.

The protein belongs to the venom Kunitz-type family. Expressed by the venom gland.

The protein localises to the secreted. Functionally, serine protease inhibitor. This is Kunitz-type serine protease inhibitor vestiginin-1 from Demansia vestigiata (Lesser black whip snake).